Here is a 377-residue protein sequence, read N- to C-terminus: MFKAYLMAEEQNEQVRDILLLPTTVNDQVGSSADEQIASVVDFFHSKLAEYNEVIQQNSRSVFVANYVQNRFLVTEFCPELAKLFDVLKVKSLEELLQRLTEWEDDPAMKASGKALRESFEAWDIFLREIDDELEKTLGPVKSAVTTLPEDSGILGLQSKTISYYVTGSAFDCVLIIVVRAFNRPEVNEHILGLYNRIDELRKLRCDVFLLTKGPPIGSSGGAYIKLIGVPFRKLYDMNEAEEQLKMNRKSALEYNGWRTLCKVVEASLVEGDSIVAKEASSSEDSVSYISQKGGTVLVDKSGEILYKHIEDDKSDSWPDIDEIVKLVEARNAKYLESTNNSTISIPKGGNLAKVNSEISVTKELATDKKKPCCVIS.

This is an uncharacterized protein from Caenorhabditis elegans.